Reading from the N-terminus, the 213-residue chain is Peroxiredoxin-5, mitochondrial (213 aa).

Residues 1 to 51 constitute a mitochondrion transit peptide; sequence MVQLRFCVLGSIAGSVLRASATWTCVAGRAGRKGAGWECGGARSFSSAAVT. Residues 55–213 form the Thioredoxin domain; it reads IKVGDTIPSV…SLAPNILSQL (159 aa). Lys-74 carries the post-translational modification N6-acetyllysine. Position 82 is an N6-acetyllysine; alternate (Lys-82). Lys-82 is subject to N6-succinyllysine; alternate. Residue Cys-99 is the Cysteine sulfenic acid (-SOH) intermediate of the active site. Cys-99 carries the S-palmitoyl cysteine lipid modification. The cysteines at positions 99 and 203 are disulfide-linked. Lys-115 is modified (N6-succinyllysine). Ser-170 and Ser-181 each carry phosphoserine. A Microbody targeting signal motif is present at residues 211 to 213; sequence SQL.

Belongs to the peroxiredoxin family. Prx5 subfamily. Monomer. S-palmitoylated. Palmitoylation occurs on the active site, inhibiting its reactivity; therefore PRDX5 palmitoylation status determines its antioxidant capacity. Post-translationally, S-palmitoylated. Depalmitoylated by ABHD10.

It is found in the mitochondrion. Its subcellular location is the cytoplasm. The protein localises to the peroxisome matrix. It carries out the reaction a hydroperoxide + [thioredoxin]-dithiol = an alcohol + [thioredoxin]-disulfide + H2O. Functionally, thiol-specific peroxidase that catalyzes the reduction of hydrogen peroxide and organic hydroperoxides to water and alcohols, respectively. Plays a role in cell protection against oxidative stress by detoxifying peroxides and as sensor of hydrogen peroxide-mediated signaling events. This is Peroxiredoxin-5, mitochondrial from Rattus norvegicus (Rat).